Consider the following 122-residue polypeptide: Large ribosomal subunit protein uL14 (122 aa).

This sequence belongs to the universal ribosomal protein uL14 family. In terms of assembly, part of the 50S ribosomal subunit. Forms a cluster with proteins L3 and L19. In the 70S ribosome, L14 and L19 interact and together make contacts with the 16S rRNA in bridges B5 and B8.

Its function is as follows. Binds to 23S rRNA. Forms part of two intersubunit bridges in the 70S ribosome. The sequence is that of Large ribosomal subunit protein uL14 from Bacillus anthracis (strain A0248).